Here is a 790-residue protein sequence, read N- to C-terminus: Cadherin-6 (790 aa).

A signal peptide spans 1-18 (MRTYRYFLLLFWVGQPYP). The propeptide occupies 19-53 (TFSTPLSKRTSGFPAKKRTLELSGNSKNELSRSKR). 5 Cadherin domains span residues 54 to 159 (SWMW…EPIF), 160 to 268 (TKEV…PPRF), 269 to 383 (PQST…PPVF), 384 to 486 (SKLA…DNPP), and 487 to 608 (EFAE…LVHP). At 54–615 (SWMWNQFFLL…VHPTGLSTGA (562 aa)) the chain is on the extracellular side. A glycan (N-linked (GlcNAc...) asparagine) is linked at Asn-255. A disordered region spans residues 261 to 291 (VNDNPPRFPQSTYQFKTPESSPPGTPIGRIK). The segment covering 269–279 (PQSTYQFKTPE) has biased composition (polar residues). 4 N-linked (GlcNAc...) asparagine glycosylation sites follow: Asn-399, Asn-437, Asn-455, and Asn-536. Residues 616 to 636 (LIAILLCIVTLLVTVVLFAAL) traverse the membrane as a helical segment. Over 637–790 (RRQRKKEPLI…YGGVDSDKDS (154 aa)) the chain is Cytoplasmic. Phosphoserine is present on residues Ser-786 and Ser-790.

Its subcellular location is the cell membrane. Its function is as follows. Cadherins are calcium-dependent cell adhesion proteins. They preferentially interact with themselves in a homophilic manner in connecting cells; cadherins may thus contribute to the sorting of heterogeneous cell types. The sequence is that of Cadherin-6 (CDH6) from Bos taurus (Bovine).